The following is a 148-amino-acid chain: Deoxyuridine 5'-triphosphate nucleotidohydrolase (148 aa).

Substrate is bound by residues 67–69 (RSG), N80, 84–86 (LID), and M94.

It belongs to the dUTPase family. The cofactor is Mg(2+).

It carries out the reaction dUTP + H2O = dUMP + diphosphate + H(+). The protein operates within pyrimidine metabolism; dUMP biosynthesis; dUMP from dCTP (dUTP route): step 2/2. In terms of biological role, this enzyme is involved in nucleotide metabolism: it produces dUMP, the immediate precursor of thymidine nucleotides and it decreases the intracellular concentration of dUTP so that uracil cannot be incorporated into DNA. This is Deoxyuridine 5'-triphosphate nucleotidohydrolase from Ralstonia nicotianae (strain ATCC BAA-1114 / GMI1000) (Ralstonia solanacearum).